The following is a 274-amino-acid chain: Dehydration-responsive element-binding protein 2A (274 aa).

2 stretches are compositionally biased toward basic and acidic residues: residues 1–10 (MERGEGRRGD) and 35–50 (KWWK…ENSS). The tract at residues 1 to 75 (MERGEGRRGD…KGGPENSNCA (75 aa)) is disordered. Positions 75–132 (AYRGVRQRTWGKWVAEIREPNRGRRLWLGSFPTALEAAHAYDEAARAMYGPTARVNFA) form a DNA-binding region, AP2/ERF.

The protein belongs to the AP2/ERF transcription factor family. ERF subfamily.

The protein resides in the nucleus. Its function is as follows. Transcriptional activator that binds specifically to the DNA sequence 5'-[AG]CCGAC-3'. Binding to the C-repeat/DRE element mediates high salinity- and dehydration-inducible transcription. The sequence is that of Dehydration-responsive element-binding protein 2A (DREB2A) from Oryza sativa subsp. indica (Rice).